A 338-amino-acid chain; its full sequence is Decarboxylase macB (338 aa).

Zn(2+) contacts are provided by H7, H9, H159, and D283.

Belongs to the metallo-dependent hydrolases superfamily. ACMSD family.

The enzyme catalyses 6-methylsalicylate + H(+) = 3-methylphenol + CO2. Its pathway is secondary metabolite biosynthesis; terpenoid biosynthesis. Functionally, decarboxylase; part of the gene cluster that mediates the biosynthesis of macrophorins, isoprenoid epoxycyclohexenones containing cyclized drimane moieties. The first step of the pathway is the synthesis of 6-methylsalicylic acid (6-MSA) by the polyketide synthase macA. 6-MSA is then converted to m-cresol by the decarboxylase macB. The cytochrome P450 monooxygenase macC then catalyzes the oxidation of m-cresol to toluquinol. Epoxidation of toluquinol is then performed by the short chain dehydrogenase macD, with the help of macE, and a further prenylation by macG leads to 7-deacetoxyyanuthone A. The next step is the hydroxylation of C-22 of 7-deacetoxyyanuthone A by the cytochrome P450 monooxygenase macH to yield 22-deacetylyanuthone A. O-Mevalon transferase macI then attaches mevalon to the hydroxyl group of 22-deacetylyanuthone A to produce yanuthone E. The terpene cyclase macJ catalyzes the cyclization of 22-deacetylyanuthone A to macrophorin A. MacJ is also able to catalyze cyclization of yanuthone E and 7-deacetoxyyanuthone A to their corresponding macrophorins. The macJ products can be further modified by macH and macJ, as well as by the FAD-dependent monooxygenase macF, to produce additional macrophorins, including 4'-oxomacrophorin A, 4'-oxomacrophorin D and 4'-oxomacrophorin E. The sequence is that of Decarboxylase macB from Penicillium terrestre.